A 115-amino-acid chain; its full sequence is Large ribosomal subunit protein bL20 (115 aa).

This sequence belongs to the bacterial ribosomal protein bL20 family.

Its function is as follows. Binds directly to 23S ribosomal RNA and is necessary for the in vitro assembly process of the 50S ribosomal subunit. It is not involved in the protein synthesizing functions of that subunit. The protein is Large ribosomal subunit protein bL20 of Salinibacter ruber (strain DSM 13855 / M31).